Reading from the N-terminus, the 35-residue chain is uncharacterized protein (35 aa).

This is an uncharacterized protein from Escherichia coli (Bacteriophage T3).